The sequence spans 160 residues: Transcriptional repressor NrdR (160 aa).

Polar residues predominate over residues 1 to 11; the sequence is MRCPSCSSLDT. Residues 1–20 form a disordered region; that stretch reads MRCPSCSSLDTQVKDSRPTE. The segment at 3–34 is a zinc-finger region; sequence CPSCSSLDTQVKDSRPTEDSSVIRRRRVCLAC. The 91-residue stretch at 49–139 folds into the ATP-cone domain; that stretch reads LTVIKRNGRR…VYRNFREAKD (91 aa).

It belongs to the NrdR family. Zn(2+) serves as cofactor.

Functionally, negatively regulates transcription of bacterial ribonucleotide reductase nrd genes and operons by binding to NrdR-boxes. The sequence is that of Transcriptional repressor NrdR from Rhodopseudomonas palustris (strain BisA53).